Consider the following 191-residue polypeptide: Thioredoxin F-type, chloroplastic (191 aa).

Residues 68 to 190 (KASLETAVGA…LVAAIEAARS (123 aa)) form the Thioredoxin domain. Residues Cys115 and Cys118 each act as nucleophile in the active site. An intrachain disulfide couples Cys115 to Cys118.

Belongs to the thioredoxin family. Plant F-type subfamily. As to quaternary structure, forms a complex with heterodimeric ferredoxin-thioredoxin reductase (FTR) and ferredoxin.

It localises to the plastid. Its subcellular location is the chloroplast. In terms of biological role, participates in various redox reactions through the reversible oxidation of the active center dithiol to a disulfide. The F form is known to activate a number of enzymes of the photosynthetic carbon cycle. In Mesembryanthemum crystallinum (Common ice plant), this protein is Thioredoxin F-type, chloroplastic.